Here is a 116-residue protein sequence, read N- to C-terminus: Small ribosomal subunit protein bS18c (116 aa).

Residues 1-13 (MKPSFRNTSPSFR) show a composition bias toward polar residues. The tract at residues 1–51 (MKPSFRNTSPSFRNRSKPYFRNRSKPYFRNRSKPSFRNTSKRFSPNQQSFR) is disordered. Residues 14-34 (NRSKPYFRNRSKPYFRNRSKP) show a composition bias toward basic residues. Residues 35 to 49 (SFRNTSKRFSPNQQS) are compositionally biased toward polar residues.

This sequence belongs to the bacterial ribosomal protein bS18 family. Part of the 30S ribosomal subunit.

It localises to the plastid. Its subcellular location is the chloroplast. The protein is Small ribosomal subunit protein bS18c of Cryptomeria japonica (Japanese cedar).